Here is a 510-residue protein sequence, read N- to C-terminus: NAD(P)H-quinone oxidoreductase subunit 2, chloroplastic (510 aa).

Transmembrane regions (helical) follow at residues 24–44 (LLLF…GLIL), 59–79 (WFYF…LFRW), 99–119 (IFQF…VEYI), 124–144 (MAIT…MFLC), 149–169 (LITI…LSGY), 183–203 (YLLM…WLYG), 229–249 (ISIA…PAPF), 295–315 (WHLL…LIAI), 323–343 (MLAY…IVGD), 354–374 (YMLF…SFGL), 395–415 (ALSL…AGFF), 418–438 (LYLF…MGLL), and 484–504 (MTVC…ILAI).

Belongs to the complex I subunit 2 family. In terms of assembly, NDH is composed of at least 16 different subunits, 5 of which are encoded in the nucleus.

The protein localises to the plastid. It is found in the chloroplast thylakoid membrane. It catalyses the reaction a plastoquinone + NADH + (n+1) H(+)(in) = a plastoquinol + NAD(+) + n H(+)(out). It carries out the reaction a plastoquinone + NADPH + (n+1) H(+)(in) = a plastoquinol + NADP(+) + n H(+)(out). Its function is as follows. NDH shuttles electrons from NAD(P)H:plastoquinone, via FMN and iron-sulfur (Fe-S) centers, to quinones in the photosynthetic chain and possibly in a chloroplast respiratory chain. The immediate electron acceptor for the enzyme in this species is believed to be plastoquinone. Couples the redox reaction to proton translocation, and thus conserves the redox energy in a proton gradient. The sequence is that of NAD(P)H-quinone oxidoreductase subunit 2, chloroplastic from Sisyrinchium montanum (Strict blue-eyed grass).